A 525-amino-acid chain; its full sequence is G patch domain-containing protein 3 (525 aa).

A disordered region spans residues 264–316 (YLADIPASPCGEPEEEVGKEEEEESHSDEDDDRGEEWERHEALHEDVTGQERT). Residues 275–298 (EPEEEVGKEEEEESHSDEDDDRGE) are compositionally biased toward acidic residues. A compositionally biased stretch (basic and acidic residues) spans 299-316 (EWERHEALHEDVTGQERT). Positions 410–458 (TKGIGRKVMERQGWAEGQGLGCRCSGVPEALDSDGQHPRCKRGLGYHGE) constitute a G-patch domain.

In terms of assembly, interacts with mitochondrial MAVS; the interaction is markedly increased upon viral infection. In terms of tissue distribution, expressed in ocular tissues including retinal pigment epithelium, cornea, ciliary muscle and non-pigmented ciliary epithelium. Also expressed in optic nerve, cartilage, skin and lymph node.

Its subcellular location is the nucleus. It is found in the cytoplasm. Functionally, involved in transcriptional regulation. It is able to activate transcription from the CXCR4 promoter and therefore it might control neural crest cell migration involved in ocular and craniofacial development. Is a negative regulator of immune antiviral response, acting via down-regulation of RIG-I-like receptors signaling and inhibition of type I interferon production. The control mechanism involves interaction with mitochondrial MAVS and inhibition of MAVS assembly with downstream proteins implicated in antiviral response, such as TBK1 and TRAF6. The protein is G patch domain-containing protein 3 (GPATCH3) of Homo sapiens (Human).